Here is a 1633-residue protein sequence, read N- to C-terminus: MVVCVLSGKVCYLSYNVTRVSDDQAAHVAATFETVAKCIADAPHRLIQEVEVLSQLDVDRLKTWNAYQPIAVETCYQDLFRQRCDLHPDSPAVVAWDGSFTYDELDHFSSLLATRLQAAGIGPDVFVTICATRCRWIPVAMLGIIKARGAFCALDLSHPLDRLKDICDALKSTITITTPTDSNIARKLASTVIVIGGDAPVESDRITPMNDRPKPTNGHPRNALYSVFTSGSSGKPKGVVVEHRSFVSSALASIQPLDIRPHDRLLHFSAYAFDISVFEVLTPLISGATIAIPSEKRRKESLTHAVQELGATWALLTPTVARLYDPDEFPSLRTLALGGELAQTSDIALWQSKNVVIIYNPAECCPIGVSGPACPADGRFLGRSHTCQRAWIVDPRDHDKLLPIGAVGELLIEGPVVARCYAHDPNFSSPDSPFIQSTPSWMLRLRSNTSSGTRLYRTGDLARYGSDASLYYMGRKDSQIKIRGQRTEPGEIESNLHSILSKDKLGVAIVVLELRGSSKIIAFVSKDTGGLGGDSNTVGQLRIEAATEETDMCIIKATSKLHRIMPAYMVPSAFLSVNYIPISRSGKIDRTRLKSFALSLPQETLLRVNNGLETGDLPESNEEHRLQRMYSLVLGISRDKIGMESDFFRLGGDSLQAMKLLALAPKEGLTDISYEDIFRYPRLKDLARKASQSVTIKKDGFGENSSVIHPFSLVIDGQSLIDMAAKQCNIERDSIEDIYPCTPMQASIMSLAVKGKIVSFLTFGLALRDHVDTKRVKDTWHAAYRANSLLRTRIIVCAETGQLYQVVVGGDIFWDDDECGNFAQPESGPSASIGGPLVRMKLVEGQLSIAIHRALYDNWSIRQLLNDISGAYNGLPLPSRPSFNCYVSYAAKSLEAASSFWSAELGDADLDAAKYPEPVSQNSHTNSRAWLGIRVVTCQKESIDVLASEFRLAWAMITYARTNKKDVVFGVLSSGRSNASKDTKEIMGPIATVTPLRVTIDGTQDVGGALEELQYRQEEQAMYTHLGLRRIGQLGRNAAAACQIQTVLIVEPDLPDLRGVWFSNDATLPNHSDADASNYRLTIKCVVGPDCTDIFAIFDHQSLPIMEVKEILSQFEHILGQIHGKEASQLSVASIDTANFKDWDTLHKSTEMPSVCRNGLLLSDPTFLPHDQMKTFPAIEEAAAHCVFQDSLQEASIARDAKMQPKEPLSSADLISEINRYDLAXXRSRPSPESILLSELALTGESHSSGTHTVFVTGASGFIGTQILRHCLEDPRIDHVIALVRGSSANEARSRTEESARRAQWWSDCHSQKLEVWPGDLAMPHLGLNETHWRRLADRTTINAIIHNGASVHWLKRYADLEATNVGATAQLLQLAVANPRLGFVYVSSGRYTDPNAEAEEPAAANVAATAMPYSQTKFVAESPIRRTAARLPHGQTQVRIISLGLVIGDPLTGVVNADDYLWRLIATCVQAGEYNSSAGSEWMPISDVTSTALAIVQTALNPAGVPATIKPITGGLMWSEIWDLVTDMGYDMEPRPESEWMATVRRDLKREQEKHPLWTLSHLVESRSQLNTDAGAGSAWADAWRGDEATTRNLRTAFRRSLRFLGEVGFLPGQKGRNTDGEVNGRAFRRAW.

An adenylation (A) domain region spans residues 80-483 (FRQRCDLHPD…GRKDSQIKIR (404 aa)). Positions 622 to 691 (EEHRLQRMYS…RLKDLARKAS (70 aa)) constitute a Carrier domain. S654 is modified (O-(pantetheine 4'-phosphoryl)serine). The condensation (C) domain stretch occupies residues 836-1127 (PLVRMKLVEG…ILGQIHGKEA (292 aa)). Residues 1256 to 1483 (VTGASGFIGT…EYNSSAGSEW (228 aa)) are reductase (R) domain.

The protein belongs to the NRP synthetase family.

It participates in alkaloid biosynthesis; ergot alkaloid biosynthesis. D-lysergyl-peptide-synthetase subunit 3; part of the gene cluster that mediates the biosynthesis of fungal ergot alkaloid. DmaW catalyzes the first step of ergot alkaloid biosynthesis by condensing dimethylallyl diphosphate (DMAP) and tryptophan to form 4-dimethylallyl-L-tryptophan. The second step is catalyzed by the methyltransferase easF that methylates 4-dimethylallyl-L-tryptophan in the presence of S-adenosyl-L-methionine, resulting in the formation of 4-dimethylallyl-L-abrine. The catalase easC and the FAD-dependent oxidoreductase easE then transform 4-dimethylallyl-L-abrine to chanoclavine-I which is further oxidized by easD in the presence of NAD(+), resulting in the formation of chanoclavine-I aldehyde. Agroclavine dehydrogenase easG then mediates the conversion of chanoclavine-I aldehyde to agroclavine via a non-enzymatic adduct reaction: the substrate is an iminium intermediate that is formed spontaneously from chanoclavine-I aldehyde in the presence of glutathione. The presence of easA is not required to complete this reaction. Further conversion of agroclavine to paspalic acid is a two-step process involving oxidation of agroclavine to elymoclavine and of elymoclavine to paspalic acid, the second step being performed by the elymoclavine oxidase cloA. Paspalic acid is then further converted to D-lysergic acid. Ergopeptines are assembled from D-lysergic acid and three different amino acids by the D-lysergyl-peptide-synthetases composed each of a monomudular and a trimodular nonribosomal peptide synthetase subunit. LpsB and lpsC encode the monomodular subunits responsible for D-lysergic acid activation and incorporation into the ergopeptine backbone. LpsA1 and A2 subunits encode the trimodular nonribosomal peptide synthetase assembling the tripeptide portion of ergopeptines. LpsA1 is responsible for formation of the major ergopeptine, ergotamine, and lpsA2 for alpha-ergocryptine, the minor ergopeptine of the total alkaloid mixture elaborated by C.purpurea. D-lysergyl-tripeptides are assembled by the nonribosomal peptide synthetases and released as N-(D-lysergyl-aminoacyl)-lactams. Cyclolization of the D-lysergyl-tripeptides is performed by the Fe(2+)/2-ketoglutarate-dependent dioxygenase easH which introduces a hydroxyl group into N-(D-lysergyl-aminoacyl)-lactam at alpha-C of the aminoacyl residue followed by spontaneous condensation with the terminal lactam carbonyl group. The chain is D-lysergyl-peptide-synthetase subunit 3 from Claviceps purpurea (Ergot fungus).